Here is a 65-residue protein sequence, read N- to C-terminus: Large ribosomal subunit protein uL29 (65 aa).

Belongs to the universal ribosomal protein uL29 family.

This Buchnera aphidicola subsp. Cinara cedri (strain Cc) protein is Large ribosomal subunit protein uL29.